A 239-amino-acid polypeptide reads, in one-letter code: 4-hydroxy-tetrahydrodipicolinate reductase (239 aa).

NAD(+) is bound by residues 8–13, 78–80, and 102–105; these read GSTGKM, GTT, and SANM. The active-site Proton donor/acceptor is the His-134. (S)-2,3,4,5-tetrahydrodipicolinate is bound at residue His-135. Lys-138 (proton donor) is an active-site residue. Position 144–145 (144–145) interacts with (S)-2,3,4,5-tetrahydrodipicolinate; that stretch reads GT.

The protein belongs to the DapB family.

Its subcellular location is the cytoplasm. The enzyme catalyses (S)-2,3,4,5-tetrahydrodipicolinate + NAD(+) + H2O = (2S,4S)-4-hydroxy-2,3,4,5-tetrahydrodipicolinate + NADH + H(+). The catalysed reaction is (S)-2,3,4,5-tetrahydrodipicolinate + NADP(+) + H2O = (2S,4S)-4-hydroxy-2,3,4,5-tetrahydrodipicolinate + NADPH + H(+). The protein operates within amino-acid biosynthesis; L-lysine biosynthesis via DAP pathway; (S)-tetrahydrodipicolinate from L-aspartate: step 4/4. In terms of biological role, catalyzes the conversion of 4-hydroxy-tetrahydrodipicolinate (HTPA) to tetrahydrodipicolinate. This is 4-hydroxy-tetrahydrodipicolinate reductase from Rickettsia conorii (strain ATCC VR-613 / Malish 7).